A 469-amino-acid chain; its full sequence is MSQAYSSSQRVSSYRRTFGGAGGFPLGSPLGSPVFPRAGFGTKGSSSSVTSRVYQVSRTSGGAGGLGALRAGRLGTGRAPSYSAGELLDFSLADAVNQEFLTTRTNEKVELQELNDRFANYIEKVRFLEQQNAALAAEVNRLKGREPTRVAEIYEEELRELRRQVEVLTNQRARVDVERDNLLDDLQRLKAKLQEEIQLKEEAENNLAAFRADVDAATLARIDLERRIESLNEEIAFLKKVHEEEIRELQAQLQEQQVQVEMDMSKPDLTAALRDIRAQYETIAAKNISEAEEWYKSKVSDLTQAANKNNDALRQAKQEMMEYRHQIQSYTCEIDALKGTNDSLMRQMREMEDRFASEASGYQDNIARLEEEIRHLKDEMARHLREYQDLLNVKMALDVEIATYRKLLEGEESRINLPIQTYSALNFRETSPEQRGSEVHTKKTVMIKTIETRDGEVVSEATQQQHEVL.

Positions 2–107 (SQAYSSSQRV…QEFLTTRTNE (106 aa)) are head. Residue S7 is modified to Phosphoserine; by CDK1. S12 is subject to Phosphoserine; by AURKB. R16 carries the post-translational modification Omega-N-methylarginine. T17 carries the post-translational modification Phosphothreonine; by AURKB and ROCK1. 2 positions are modified to phosphoserine; by CDK1: S28 and S32. R37 carries the asymmetric dimethylarginine; alternate modification. R37 is subject to Omega-N-methylarginine; alternate. S45 bears the Phosphoserine mark. Residue R58 is modified to ADP-ribosylarginine. Residue S60 is modified to Phosphoserine; by AURKB. Residue R70 is modified to Omega-N-methylarginine. Position 76 is a phosphothreonine; by ROCK1 (T76). A Phosphoserine modification is found at S81. The IF rod domain occupies 107-415 (EKVELQELND…KLLEGEESRI (309 aa)). The coil 1A stretch occupies residues 108–140 (KVELQELNDRFANYIEKVRFLEQQNAALAAEVN). Positions 141–150 (RLKGREPTRV) are linker 1. A coil 1B region spans residues 151 to 251 (AEIYEEELRE…HEEEIRELQA (101 aa)). Residues 252 to 267 (QLQEQQVQVEMDMSKP) are linker 12. An interaction with NEB region spans residues 267–414 (PDLTAALRDI…RKLLEGEESR (148 aa)). The interval 268 to 286 (DLTAALRDIRAQYETIAAK) is coil 2A. The segment at 287 to 294 (NISEAEEW) is linker 2. Phosphoserine is present on residues S289, S357, S360, and S423. Residues 295 to 411 (YKSKVSDLTQ…ATYRKLLEGE (117 aa)) form a coil 2B region. The tract at residues 412–469 (ESRINLPIQTYSALNFRETSPEQRGSEVHTKKTVMIKTIETRDGEVVSEATQQQHEVL) is tail. The tract at residues 437–452 (SEVHTKKTVMIKTIET) is interaction with CRYAB.

The protein belongs to the intermediate filament family. In terms of assembly, homomer. Interacts with DST. Interacts with MTM1. Interacts with EPPK1; interaction is dependent of higher-order structure of intermediate filament. Interacts with CRYAB. Interacts with NEB (via nebulin repeats 160-164). Interacts (via rod region) with NEBL (via nebulin repeats 1-5). Interacts with ASB2; the interaction targets DES for proteasomal degradation. Interacts with PKP1. Interacts with FLII. ADP-ribosylation prevents ability to form intermediate filaments. In terms of processing, phosphorylation at Ser-7, Ser-28 and Ser-32 by CDK1, phosphorylation at Ser-60 by AURKB and phosphorylation at Thr-76 by ROCK1 contribute to efficient separation of desmin intermediate filaments during mitosis. Post-translationally, ubiquitination by a SCF-like complex containing ASB2 leads to proteasomal degradation.

The protein resides in the cytoplasm. The protein localises to the myofibril. It localises to the sarcomere. It is found in the z line. Its subcellular location is the cell membrane. The protein resides in the sarcolemma. The protein localises to the nucleus. It localises to the cell tip. It is found in the nucleus envelope. Muscle-specific type III intermediate filament essential for proper muscular structure and function. Plays a crucial role in maintaining the structure of sarcomeres, inter-connecting the Z-disks and forming the myofibrils, linking them not only to the sarcolemmal cytoskeleton, but also to the nucleus and mitochondria, thus providing strength for the muscle fiber during activity. In adult striated muscle they form a fibrous network connecting myofibrils to each other and to the plasma membrane from the periphery of the Z-line structures. May act as a sarcomeric microtubule-anchoring protein: specifically associates with detyrosinated tubulin-alpha chains, leading to buckled microtubules and mechanical resistance to contraction. Required for nuclear membrane integrity, via anchoring at the cell tip and nuclear envelope, resulting in maintenance of microtubule-derived intracellular mechanical forces. Contributes to the transcriptional regulation of the NKX2-5 gene in cardiac progenitor cells during a short period of cardiomyogenesis and in cardiac side population stem cells in the adult. Plays a role in maintaining an optimal conformation of nebulette (NEB) on heart muscle sarcomeres to bind and recruit cardiac alpha-actin. The polypeptide is Desmin (DES) (Canis lupus familiaris (Dog)).